A 61-amino-acid chain; its full sequence is Outer membrane lipoprotein YnbE (61 aa).

Residues M1–G16 form the signal peptide. C17 carries the N-palmitoyl cysteine lipid modification. C17 carries the S-diacylglycerol cysteine lipid modification.

It belongs to the lipoprotein YnbE family. In terms of assembly, interacts with the C-terminal region of the probable phospholipid transport protein YdbH.

The protein resides in the cell outer membrane. Involved in outer membrane lipid homeostasis. Interacts with the inner membrane protein YdbH to form a functional protein bridge connecting the inner and outer membranes of the cell. Is required for YdbH's function and may facilitate phospholipid transport through the periplasm. The protein is Outer membrane lipoprotein YnbE (ynbE) of Escherichia coli O6:H1 (strain CFT073 / ATCC 700928 / UPEC).